Here is a 691-residue protein sequence, read N- to C-terminus: Homeobox protein NOBOX (691 aa).

The segment covering 94 to 103 (ELTRGQKAGE) has biased composition (basic and acidic residues). The segment at 94–233 (ELTRGQKAGE…NSARATHNPV (140 aa)) is disordered. Over residues 216–228 (PTSSPGAPNSARA) the composition is skewed to polar residues. Residues 272-363 (RKKTRTLYRS…NRRAKWRKME (92 aa)) constitute a DNA-binding region (homeobox). Disordered stretches follow at residues 366–385 (NGKE…SQCS), 394–437 (VPME…AQRV), and 635–691 (QALG…SHVP). The span at 395-405 (PMEPKPDPFPQ) shows a compositional bias: pro residues. Polar residues predominate over residues 420–432 (TSDQTLAPTQPSE). Over residues 679–691 (EEARGDDKNSHVP) the composition is skewed to basic and acidic residues.

In terms of tissue distribution, expressed in ovaries, testes and pancreas. Expressed within all stages of the adult female germline, from primordial follicles through to MII oocytes.

Its subcellular location is the nucleus. Transcription factor which may play a role in oogenesis. Binds preferentially to the DNA sequences 5'-TAATTG-3', 5'-TAGTTG-3' and 5'-TAATTA-3'. The polypeptide is Homeobox protein NOBOX (NOBOX) (Homo sapiens (Human)).